Consider the following 125-residue polypeptide: Outer membrane protein assembly factor BamE (125 aa).

A signal peptide spans 1 to 17 (MNKTLILALSALLGLAA). Cys-18 carries N-palmitoyl cysteine lipidation. Cys-18 is lipidated: S-diacylglycerol cysteine.

It belongs to the BamE family. As to quaternary structure, part of the Bam complex.

Its subcellular location is the cell outer membrane. Part of the outer membrane protein assembly complex, which is involved in assembly and insertion of beta-barrel proteins into the outer membrane. The chain is Outer membrane protein assembly factor BamE from Neisseria meningitidis serogroup B (strain ATCC BAA-335 / MC58).